Reading from the N-terminus, the 216-residue chain is Probable GTP-binding protein EngB (216 aa).

The EngB-type G domain maps to 26–200 (EGIEIAFAGR…RAKLDTWFAP (175 aa)). Residues 34–41 (GRSNAGKS), 61–65 (GRTQL), 79–82 (DLPG), 146–149 (TKAD), and 179–181 (YSS) each bind GTP. Mg(2+) is bound by residues serine 41 and threonine 63.

This sequence belongs to the TRAFAC class TrmE-Era-EngA-EngB-Septin-like GTPase superfamily. EngB GTPase family. It depends on Mg(2+) as a cofactor.

In terms of biological role, necessary for normal cell division and for the maintenance of normal septation. The protein is Probable GTP-binding protein EngB of Vibrio vulnificus (strain CMCP6).